The sequence spans 353 residues: Photosystem II protein D1 (353 aa).

Position 2 is an N-acetylthreonine (Thr2). Thr2 bears the Phosphothreonine mark. 3 helical membrane-spanning segments follow: residues 29–46, 118–133, and 142–156; these read YIGW…TATS, HFLL…EWEL, and WIAV…AAAA. Residue His118 participates in chlorophyll a binding. Residue Tyr126 coordinates pheophytin a. Residues Asp170 and Glu189 each contribute to the [CaMn4O5] cluster site. The helical transmembrane segment at 197 to 218 threads the bilayer; sequence FHMLGVAGVFGGSLFSAMHGSL. Position 198 (His198) interacts with chlorophyll a. Residues His215 and 264–265 contribute to the a quinone site; that span reads SF. His215 is a Fe cation binding site. Fe cation is bound at residue His272. Residues 274–288 form a helical membrane-spanning segment; sequence FLAAWPVVGIWFTAL. 4 residues coordinate [CaMn4O5] cluster: His332, Glu333, Asp342, and Ala344. Residues 345–353 constitute a propeptide that is removed on maturation; sequence AVEAPSING.

It belongs to the reaction center PufL/M/PsbA/D family. PSII is composed of 1 copy each of membrane proteins PsbA, PsbB, PsbC, PsbD, PsbE, PsbF, PsbH, PsbI, PsbJ, PsbK, PsbL, PsbM, PsbT, PsbX, PsbY, PsbZ, Psb30/Ycf12, at least 3 peripheral proteins of the oxygen-evolving complex and a large number of cofactors. It forms dimeric complexes. The D1/D2 heterodimer binds P680, chlorophylls that are the primary electron donor of PSII, and subsequent electron acceptors. It shares a non-heme iron and each subunit binds pheophytin, quinone, additional chlorophylls, carotenoids and lipids. D1 provides most of the ligands for the Mn4-Ca-O5 cluster of the oxygen-evolving complex (OEC). There is also a Cl(-1) ion associated with D1 and D2, which is required for oxygen evolution. The PSII complex binds additional chlorophylls, carotenoids and specific lipids. serves as cofactor. In terms of processing, tyr-161 forms a radical intermediate that is referred to as redox-active TyrZ, YZ or Y-Z. Post-translationally, C-terminally processed by CTPA; processing is essential to allow assembly of the oxygen-evolving complex and thus photosynthetic growth.

It localises to the plastid. It is found in the chloroplast thylakoid membrane. The enzyme catalyses 2 a plastoquinone + 4 hnu + 2 H2O = 2 a plastoquinol + O2. Photosystem II (PSII) is a light-driven water:plastoquinone oxidoreductase that uses light energy to abstract electrons from H(2)O, generating O(2) and a proton gradient subsequently used for ATP formation. It consists of a core antenna complex that captures photons, and an electron transfer chain that converts photonic excitation into a charge separation. The D1/D2 (PsbA/PsbD) reaction center heterodimer binds P680, the primary electron donor of PSII as well as several subsequent electron acceptors. The polypeptide is Photosystem II protein D1 (Vitis vinifera (Grape)).